A 483-amino-acid chain; its full sequence is ATP synthase subunit beta (483 aa).

Residue 169 to 176 participates in ATP binding; sequence GGAGVGKT.

It belongs to the ATPase alpha/beta chains family. In terms of assembly, F-type ATPases have 2 components, CF(1) - the catalytic core - and CF(0) - the membrane proton channel. CF(1) has five subunits: alpha(3), beta(3), gamma(1), delta(1), epsilon(1). CF(0) has three main subunits: a(1), b(2) and c(9-12). The alpha and beta chains form an alternating ring which encloses part of the gamma chain. CF(1) is attached to CF(0) by a central stalk formed by the gamma and epsilon chains, while a peripheral stalk is formed by the delta and b chains.

Its subcellular location is the cell membrane. The catalysed reaction is ATP + H2O + 4 H(+)(in) = ADP + phosphate + 5 H(+)(out). Produces ATP from ADP in the presence of a proton gradient across the membrane. The catalytic sites are hosted primarily by the beta subunits. The polypeptide is ATP synthase subunit beta (Rhodococcus erythropolis (strain PR4 / NBRC 100887)).